Reading from the N-terminus, the 402-residue chain is uncharacterized protein (402 aa).

12 helical membrane passes run 26-46, 67-87, 96-116, 126-146, 168-188, 213-233, 235-255, 289-309, 312-332, 338-358, 360-380, and 381-401; these read IFMS…AIAY, VALA…YVGF, FAAF…LTII, TVSI…NGTL, LFIL…IGFL, YVAY…MIDS, LFLL…GGYG, PIVI…GSII, ISVF…FDSL, FKNI…AVTI, FALL…SFLL, and LYKK…GYLI.

This sequence belongs to the chromate ion transporter (CHR) (TC 2.A.51) family.

It localises to the cell membrane. This is an uncharacterized protein from Methanocaldococcus jannaschii (strain ATCC 43067 / DSM 2661 / JAL-1 / JCM 10045 / NBRC 100440) (Methanococcus jannaschii).